The primary structure comprises 138 residues: Extracellular glycoprotein lacritin (138 aa).

The signal sequence occupies residues 1–19 (MKFTTLLFLAAVAGALVYA). The segment at 20–79 (EDASSDSTGADPAQEAGTSKPNEEISGPAEPASPPETTTTAQETSAAAVQGTAKVTSSRQ) is disordered. The span at 43–67 (EISGPAEPASPPETTTTAQETSAAA) shows a compositional bias: low complexity. N119 carries N-linked (GlcNAc...) asparagine glycosylation.

As to expression, expressed in secretory granules of many acinar cells in lacrimal gland and in scattered acinar cells of salivary glands.

Its subcellular location is the secreted. Functionally, modulates secretion by lacrimal acinar cells. This chain is Extracellular glycoprotein lacritin (LACRT), found in Homo sapiens (Human).